Consider the following 399-residue polypeptide: Na(+)/H(+) antiporter NhaA (399 aa).

The next 11 helical transmembrane spans lie at 12 to 32, 60 to 80, 94 to 114, 126 to 146, 155 to 175, 178 to 198, 206 to 226, 263 to 283, 284 to 304, 336 to 356, and 372 to 392; these read LDIAAGVILVGAAVLALIAAN, LLLWINDGLMAVFFLLVGLEI, LAALPAVAAVGGMVVPALIYA, GWAIPAATDIAFALGILTLLG, IFLTALAIIDDLGAILIIAFF, ASLSPLALLLAAACLALLIGL, LWPYLLIGVVLWVCVLKSGVH, PWVTYAILPLFAFANAGVSLA, GLPPSALLAPVPLGIVLGLFL, GVALITGVGFTMSLFIGTLAF, and LGVLSGSLLSGVIGYLVLRLS.

It belongs to the NhaA Na(+)/H(+) (TC 2.A.33) antiporter family.

It localises to the cell inner membrane. It catalyses the reaction Na(+)(in) + 2 H(+)(out) = Na(+)(out) + 2 H(+)(in). Na(+)/H(+) antiporter that extrudes sodium in exchange for external protons. In Rhodospirillum rubrum (strain ATCC 11170 / ATH 1.1.1 / DSM 467 / LMG 4362 / NCIMB 8255 / S1), this protein is Na(+)/H(+) antiporter NhaA.